Consider the following 226-residue polypeptide: MSANLDKSLDEIIGSNKAGSNRARVGGTRGNGPRRVGKQVGSQRRSLPNRRGPIRKNTRAPPNAVARVAKLLDTTREVKVNVEGLPRDIKQDAVREFFASQVGGVQRVLLSYNERGQSTGMANITFKNGELARRAVERFNGSPIDGGRSRLRLNLIVDPNQRPVKSLADRIKAMPQKGGNAPRPVKRGPNRKAAMAKSQNKPKREKPAKKSLEDLDKEMADYFEKK.

The segment at 1–62 is disordered; it reads MSANLDKSLD…PIRKNTRAPP (62 aa). Ser-2 is subject to N-acetylserine. Phosphoserine occurs at positions 8 and 100. Residues 78–158 form the RRM domain; sequence VKVNVEGLPR…SRLRLNLIVD (81 aa). Residues 173 to 226 form a disordered region; that stretch reads AMPQKGGNAPRPVKRGPNRKAAMAKSQNKPKREKPAKKSLEDLDKEMADYFEKK. A compositionally biased stretch (basic and acidic residues) spans 208-226; sequence AKKSLEDLDKEMADYFEKK.

As to quaternary structure, component of the transcription/export (TREX) complex, which is at least is formed of SUB2, TEX1 and YRA1 and the THO complex composed of HPR1, MFT1, THO2 and THP1. Interacts with RDS3 and YRA2.

It localises to the nucleus. RNA-binding RNA annealing protein. May have a role in pre-mRNA metabolism. Component the TREX complex, which operates in coupling transcription elongation to mRNA export. The polypeptide is RNA annealing protein YRA1 (YRA1) (Saccharomyces cerevisiae (strain ATCC 204508 / S288c) (Baker's yeast)).